We begin with the raw amino-acid sequence, 411 residues long: 1-deoxy-D-xylulose 5-phosphate reductoisomerase (411 aa).

Residues Thr-23, Gly-24, Ser-25, Ile-26, Gly-49, Arg-50, Asn-51, and Asn-137 each contribute to the NADPH site. Lys-138 lines the 1-deoxy-D-xylulose 5-phosphate pocket. Glu-139 lines the NADPH pocket. Asp-163 is a binding site for Mn(2+). 1-deoxy-D-xylulose 5-phosphate is bound by residues Ser-164, Glu-165, Ser-199, and His-222. Glu-165 contributes to the Mn(2+) binding site. NADPH is bound at residue Gly-228. 1-deoxy-D-xylulose 5-phosphate-binding residues include Ser-235, Asn-240, Lys-241, and Glu-244. Glu-244 contacts Mn(2+).

It belongs to the DXR family. Requires Mg(2+) as cofactor. Mn(2+) is required as a cofactor.

It carries out the reaction 2-C-methyl-D-erythritol 4-phosphate + NADP(+) = 1-deoxy-D-xylulose 5-phosphate + NADPH + H(+). The protein operates within isoprenoid biosynthesis; isopentenyl diphosphate biosynthesis via DXP pathway; isopentenyl diphosphate from 1-deoxy-D-xylulose 5-phosphate: step 1/6. Functionally, catalyzes the NADPH-dependent rearrangement and reduction of 1-deoxy-D-xylulose-5-phosphate (DXP) to 2-C-methyl-D-erythritol 4-phosphate (MEP). This Mannheimia succiniciproducens (strain KCTC 0769BP / MBEL55E) protein is 1-deoxy-D-xylulose 5-phosphate reductoisomerase.